Here is a 571-residue protein sequence, read N- to C-terminus: Fumarate reductase (cytochrome) (571 aa).

20 residues coordinate heme c: His-8, Cys-14, Cys-17, His-18, Cys-36, Cys-39, His-40, His-52, His-58, His-61, Cys-68, Cys-71, His-72, Ala-74, His-75, Cys-82, Cys-85, His-86, Asn-91, and Tyr-94. The segment at 118-571 is flavoprotein-like; sequence ALASAPHDTV…EEAAKYSKKN (454 aa). Residues Ala-137, Glu-156, Asn-164, Ala-165, Ala-169, Gly-170, Gly-171, Gly-278, and Gln-338 each contribute to the FAD site. Gly-170 lines the succinate pocket. Positions 365, 377, and 378 each coordinate succinate. Thr-377, Glu-378, and Arg-402 together coordinate fumarate. The active-site Proton donor is Arg-402. Lys-431 is a heme c binding site. His-504 contacts succinate. His-504 is a binding site for fumarate. The FAD site is built by His-505 and Glu-534. Residues Arg-544 and Gly-547 each contribute to the succinate site. Residues Arg-544 and Gly-547 each coordinate fumarate. Residues Ala-549 and Ile-550 each contribute to the FAD site.

Monomer. It depends on FAD as a cofactor. The cofactor is heme c.

The protein resides in the periplasm. The catalysed reaction is 2 Fe(III)-[cytochrome c] + succinate = fumarate + 2 Fe(II)-[cytochrome c] + 2 H(+). In terms of biological role, flavocytochrome that catalyzes the reduction of fumarate to succinate. Is essential for fumarate respiration during anaerobic growth, acting as the terminal reductase. Receives electrons from the membrane-bound tetraheme c-type cytochrome CymA. In vitro, can use the artificial electron donor methyl viologen. The polypeptide is Fumarate reductase (cytochrome) (fccA) (Shewanella frigidimarina).